The primary structure comprises 62 residues: DNA gyrase inhibitor YacG (62 aa).

Zn(2+) contacts are provided by cysteine 8, cysteine 11, cysteine 27, and cysteine 31.

Belongs to the DNA gyrase inhibitor YacG family. As to quaternary structure, interacts with GyrB. The cofactor is Zn(2+).

Inhibits all the catalytic activities of DNA gyrase by preventing its interaction with DNA. Acts by binding directly to the C-terminal domain of GyrB, which probably disrupts DNA binding by the gyrase. The protein is DNA gyrase inhibitor YacG of Actinobacillus pleuropneumoniae serotype 5b (strain L20).